Here is a 352-residue protein sequence, read N- to C-terminus: Beta-hexosaminidase (352 aa).

Substrate contacts are provided by residues Asp74, Arg82, Arg149, and 179-180; that span reads KH. His192 acts as the Proton donor/acceptor in catalysis. The active-site Nucleophile is Asp263.

This sequence belongs to the glycosyl hydrolase 3 family. NagZ subfamily.

Its subcellular location is the cytoplasm. It carries out the reaction Hydrolysis of terminal non-reducing N-acetyl-D-hexosamine residues in N-acetyl-beta-D-hexosaminides.. It functions in the pathway cell wall biogenesis; peptidoglycan recycling. In terms of biological role, plays a role in peptidoglycan recycling by cleaving the terminal beta-1,4-linked N-acetylglucosamine (GlcNAc) from peptide-linked peptidoglycan fragments, giving rise to free GlcNAc, anhydro-N-acetylmuramic acid and anhydro-N-acetylmuramic acid-linked peptides. The polypeptide is Beta-hexosaminidase (Bordetella pertussis (strain Tohama I / ATCC BAA-589 / NCTC 13251)).